The sequence spans 398 residues: Sex hormone-binding globulin (398 aa).

A signal peptide spans 1–31 (MATPPLVPLLLLLLLLLPHAHHRLALRSVLA). Laminin G-like domains follow at residues 41 to 213 (VHLI…RRSC) and 220 to 386 (GIFF…THSC). Cystine bridges form between Cys-189–Cys-213 and Cys-358–Cys-386. Residues Asn-376 and Asn-392 are each glycosylated (N-linked (GlcNAc...) asparagine).

As to quaternary structure, homodimer.

It is found in the secreted. In terms of biological role, functions as an androgen transport protein, but may also be involved in receptor mediated processes. Each dimer binds one molecule of steroid. Specific for 5-alpha-dihydrotestosterone, testosterone, and 17-beta-estradiol. Regulates the plasma metabolic clearance rate of steroid hormones by controlling their plasma concentration. In Oryctolagus cuniculus (Rabbit), this protein is Sex hormone-binding globulin (SHBG).